Reading from the N-terminus, the 476-residue chain is MGIKFLEVIKPFCAVLPEIQKPERKIQFREKVLWTAITLFIFLVCCQIPLFGIMSSDSADPFYWMRVILASNRGTLMELGISPIVTSGLIMQLLAGAKIIEVGDTPKDRALFNGAQKLFGMIITIGQAIVYVMTGMYGDPSEMGAGICLVIIIQLFVAGLIVLLLDELLQKGYGLGSGISLFIATNICETIVWKAFSPTTVNTGRGTEFEGAIIALFHLLATRTDKVRALREAFYRQNLPNLMNLIATVFVFAVVIYFQGFRVDLPIKSARYRGQYNTYPIKLFYTSNIPIILQSALVSNLYVISQMLSTRFSGNFLVNLLGTWSDTSTGGPARAYPVGGLCYYFSPPESFGSVLDDPVHASIYIVFMLGSCAFFSKTWIEVSGSSAKDVAKQLKEQQMVMRGHRETSMVHELNRYIPTAAAFGGLCIGGLSVMADFLGAIGSGTGILLAVTIIYQYFEIFVKEQSEMGSMGALLF.

Residues 2–33 (GIKFLEVIKPFCAVLPEIQKPERKIQFREKVL) lie on the Cytoplasmic side of the membrane. Residues 34–53 (WTAITLFIFLVCCQIPLFGI) traverse the membrane as a helical segment. At 54–76 (MSSDSADPFYWMRVILASNRGTL) the chain is on the lumenal side. A helical transmembrane segment spans residues 77–96 (MELGISPIVTSGLIMQLLAG). The Cytoplasmic portion of the chain corresponds to 97–117 (AKIIEVGDTPKDRALFNGAQK). The chain crosses the membrane as a helical span at residues 118–138 (LFGMIITIGQAIVYVMTGMYG). Residues 139–144 (DPSEMG) lie on the Lumenal side of the membrane. A helical transmembrane segment spans residues 145 to 165 (AGICLVIIIQLFVAGLIVLLL). At 166–172 (DELLQKG) the chain is on the cytoplasmic side. The chain crosses the membrane as a helical span at residues 173–193 (YGLGSGISLFIATNICETIVW). Residues 194 to 240 (KAFSPTTVNTGRGTEFEGAIIALFHLLATRTDKVRALREAFYRQNLP) are Lumenal-facing. A helical membrane pass occupies residues 241–261 (NLMNLIATVFVFAVVIYFQGF). Over 262 to 288 (RVDLPIKSARYRGQYNTYPIKLFYTSN) the chain is Cytoplasmic. The helical transmembrane segment at 289–309 (IPIILQSALVSNLYVISQMLS) threads the bilayer. Residues 310–354 (TRFSGNFLVNLLGTWSDTSTGGPARAYPVGGLCYYFSPPESFGSV) are Lumenal-facing. Residues 355–375 (LDDPVHASIYIVFMLGSCAFF) traverse the membrane as a helical segment. Over 376–420 (SKTWIEVSGSSAKDVAKQLKEQQMVMRGHRETSMVHELNRYIPTA) the chain is Cytoplasmic. The helical transmembrane segment at 421–441 (AAFGGLCIGGLSVMADFLGAI) threads the bilayer. Residues 442–445 (GSGT) lie on the Lumenal side of the membrane. Residues 446–462 (GILLAVTIIYQYFEIFV) traverse the membrane as a helical segment. Over 463-476 (KEQSEMGSMGALLF) the chain is Cytoplasmic.

This sequence belongs to the SecY/SEC61-alpha family. The SEC61 channel-forming translocon complex consists of channel-forming core components SEC61A1, SEC61B and SEC61G and different auxiliary components such as SEC62 and SEC63. The SEC61 channel associates with the multi-pass translocon (MPT) complex.

Its subcellular location is the endoplasmic reticulum membrane. In terms of biological role, component of SEC61 channel-forming translocon complex that mediates transport of signal peptide-containing precursor polypeptides across the endoplasmic reticulum (ER). Forms a ribosome receptor and a gated pore in the ER membrane, both functions required for cotranslational translocation of nascent polypeptides. May cooperate with auxiliary protein SEC62, SEC63 and HSPA5/BiP to enable post-translational transport of small presecretory proteins. The SEC61 channel is also involved in ER membrane insertion of transmembrane proteins: it mediates membrane insertion of the first few transmembrane segments of proteins, while insertion of subsequent transmembrane regions of multi-pass membrane proteins is mediated by the multi-pass translocon (MPT) complex. The polypeptide is Protein transport protein Sec61 subunit alpha (sec61a) (Gadus ogac (Greenland cod)).